Here is a 757-residue protein sequence, read N- to C-terminus: MDVNPTLLFLKVPAQNAISTTFPYTGDPPYSHGTGTGYTMDTVNRTHQYSEKGRWTTNTETGAPQLNPIDGPLPEDNEPSGYAQTDCVLEAMAFLEESHPGIFENSCLETMEVVQQTRVDKLTQGRQTYDWTLNRNQPAATALANTIEVFRSNGLTANESGRLIDFLKDVMESMDKEEMEITTHFQRKRRVRDNMTKKMVTQRTIGKKKQRLNKRSYLIRALTLNTMTKDAERGKLKRRAIATPGMQIRGFVYFVETLARSICEKLEQSGLPVGGNEKKAKLANVVRKMMTNSQDTELSFTITGDNTKWNENQNPRMFLAMITYITRNQPEWFRNVLSIAPIMFSNKMARLGKGYMFESKSMKLRTQIPAEMLASIDLKYFNDSTRKKIEKIRPLLIDGTASLSPGMMMGMFNMLSTVLGVSILNLGQKRYTKTTYWWDGLQSSDDFALIVNAPNHEGIQAGVDRFYRTCKLLGINMSKKKSYINRTGTFEFTSFFYRYGFVANFSMELPSFGVSGINESADMSIGVTVIKNNMINNDLGPATAQMALQLFIKDYRYTYRCHRGDTQIQTRRSFEIKKLWEQTRSKAGLLVSDGGPNLYNIRNLHIPEVCLKWELMDEDYQGRLCNPLNPFVSHKEIESVNNAVMMPAHGPAKNMEYDAVATTHSWIPKRNRSILNTSQRGILEDEQMYQKCCNLFEKFFPSSSYRRPVGISSMVEAMVSRARIDARIDFESGRIKKEEFAEIMKICSTIEELRRQK.

The disordered stretch occupies residues 53–82 (GRWTTNTETGAPQLNPIDGPLPEDNEPSGY). Residues 55–64 (WTTNTETGAP) show a composition bias toward polar residues. Short sequence motifs (nuclear localization signal) lie at residues 187–195 (RKRRVRDNM) and 203–216 (RTIG…NKRS). Residues 249-256 (RGFVYFVE) are promoter-binding site. A RdRp catalytic domain is found at 286–483 (VRKMMTNSQD…GINMSKKKSY (198 aa)).

It belongs to the influenza viruses polymerase PB1 family. In terms of assembly, influenza RNA polymerase is composed of three subunits: PB1, PB2 and PA. Interacts (via N-terminus) with PA (via C-terminus). Interacts (via C-terminus) with PB2 (via N-terminus); this interaction is essential for transcription initiation. Interacts (via C-terminus) with human PKP2 (via N-terminus); the interaction competitively inhibits the interaction between the RNA polymerase subunits PB1 and PB2. In terms of processing, phosphorylated by host PRKCA.

The protein resides in the host nucleus. The protein localises to the host cytoplasm. It catalyses the reaction RNA(n) + a ribonucleoside 5'-triphosphate = RNA(n+1) + diphosphate. Its function is as follows. RNA-dependent RNA polymerase which is responsible for replication and transcription of virus RNA segments. The transcription of viral mRNAs occurs by a unique mechanism called cap-snatching. 5' methylated caps of cellular mRNAs are cleaved after 10-13 nucleotides by PA. In turn, these short capped RNAs are used as primers by PB1 for transcription of viral mRNAs. During virus replication, PB1 initiates RNA synthesis and copy vRNA into complementary RNA (cRNA) which in turn serves as a template for the production of more vRNAs. The protein is RNA-directed RNA polymerase catalytic subunit of Influenza A virus (strain A/Brevig Mission/1/1918 H1N1) (Influenza A virus (strain A/South Carolina/1/1918 H1N1)).